The following is a 630-amino-acid chain: tRNA uridine 5-carboxymethylaminomethyl modification enzyme MnmG (630 aa).

13–18 (GGGHAG) serves as a coordination point for FAD. 273–287 (GPRYCPSIEDKVMRF) contributes to the NAD(+) binding site.

It belongs to the MnmG family. Homodimer. Heterotetramer of two MnmE and two MnmG subunits. The cofactor is FAD.

The protein localises to the cytoplasm. Functionally, NAD-binding protein involved in the addition of a carboxymethylaminomethyl (cmnm) group at the wobble position (U34) of certain tRNAs, forming tRNA-cmnm(5)s(2)U34. The protein is tRNA uridine 5-carboxymethylaminomethyl modification enzyme MnmG of Actinobacillus pleuropneumoniae serotype 5b (strain L20).